The chain runs to 295 residues: Nucleotide-binding protein BH3569 (295 aa).

14–21 (GMSGAGKT) serves as a coordination point for ATP. GTP is bound at residue 65–68 (DLRG).

This sequence belongs to the RapZ-like family.

Displays ATPase and GTPase activities. The polypeptide is Nucleotide-binding protein BH3569 (Halalkalibacterium halodurans (strain ATCC BAA-125 / DSM 18197 / FERM 7344 / JCM 9153 / C-125) (Bacillus halodurans)).